The following is a 534-amino-acid chain: Cytochrome P450 monooxygenase vrtK (534 aa).

Position 448 (C448) interacts with heme.

The protein belongs to the cytochrome P450 family. It depends on heme as a cofactor.

It functions in the pathway secondary metabolite biosynthesis; terpenoid biosynthesis. Cytochrome P450 monooxygenase; part of the gene cluster that mediates the biosynthesis of viridicatumtoxin, a tetracycline-like fungal meroterpenoid with a unique, fused spirobicyclic ring system. The first step of the pathway is the production of the malonamoyl-CoA starter unit for the polyketide synthase vrtA. The aldolase vrtJ may be involved in the synthesis of the malonamate substrate for malonamoyl-CoA synthetase vrtB. The polyketide synthase vrtA then may utilize the malonamoyl-CoA starter unit, followed by sequential condensation of eight malonyl-CoA units to form the polyketide backbone. The cyclization of the last ring could be mediated by the lactamase-like protein vrtG. The proposed post-PKS tailoring steps are a hydroxylation at C5 catalyzed the cytochrome P450 monooxygenase vrtE, a hydroxylation at C12a catalyzed by VrtH and/or VrtI, and an O-methylation by the O-methyltransferase vrtF. VrtC is then proposed to catalyze the transfer of a geranyl group synthesized by vrtD to the aromatic C ring of the tetracyclic polyketide intermediate of viridicatumtoxin to yield previridicatumtoxin. Finally, the cytochrome P450 monooxygenase vrtK catalyzes the spirocyclization of the geranyl moiety of previridicatumtoxin to afford viridicatumtoxin. This Penicillium aethiopicum protein is Cytochrome P450 monooxygenase vrtK.